Here is a 287-residue protein sequence, read N- to C-terminus: MASLKSIKKRIVSVKNTRQITKAMKMVSAAKLRRAQENVVAARPYAKKLGEVLERLSKSQDVDGSPLMEKRQGGKALLIIVSSDRGLCGGFNANICKAAERFAKERGSEFTELSMMTIGRKGYEFLKNRHKIYKNYANIFGTLNYQTAALIARELIDGYLAEEYDEVYLLFNAFKSVMTQDITLEQLLPVTPEVAAEEEYAPEYIYEPSKAALLDELLPKHIEVQMFKAMLESVASEHGARMTAMDSASKNASEMIGKLTLQYNRARQAAITTELMEIISGSESIKG.

The protein belongs to the ATPase gamma chain family. In terms of assembly, F-type ATPases have 2 components, CF(1) - the catalytic core - and CF(0) - the membrane proton channel. CF(1) has five subunits: alpha(3), beta(3), gamma(1), delta(1), epsilon(1). CF(0) has three main subunits: a, b and c.

It localises to the cell inner membrane. Functionally, produces ATP from ADP in the presence of a proton gradient across the membrane. The gamma chain is believed to be important in regulating ATPase activity and the flow of protons through the CF(0) complex. The protein is ATP synthase gamma chain of Geotalea uraniireducens (strain Rf4) (Geobacter uraniireducens).